The following is a 245-amino-acid chain: Probable phosphatase YcdX (245 aa).

Zn(2+)-binding residues include His7, His9, His15, His40, Glu73, His101, His131, Asp192, and His194.

The protein belongs to the PHP family. As to quaternary structure, homotrimer. It depends on Zn(2+) as a cofactor.

This chain is Probable phosphatase YcdX, found in Escherichia coli (strain K12 / MC4100 / BW2952).